Here is a 156-residue protein sequence, read N- to C-terminus: S-ribosylhomocysteine lyase (156 aa).

3 residues coordinate Fe cation: His53, His57, and Cys122.

This sequence belongs to the LuxS family. As to quaternary structure, homodimer. The cofactor is Fe cation.

It carries out the reaction S-(5-deoxy-D-ribos-5-yl)-L-homocysteine = (S)-4,5-dihydroxypentane-2,3-dione + L-homocysteine. Involved in the synthesis of autoinducer 2 (AI-2) which is secreted by bacteria and is used to communicate both the cell density and the metabolic potential of the environment. The regulation of gene expression in response to changes in cell density is called quorum sensing. Catalyzes the transformation of S-ribosylhomocysteine (RHC) to homocysteine (HC) and 4,5-dihydroxy-2,3-pentadione (DPD). This chain is S-ribosylhomocysteine lyase, found in Finegoldia magna (strain ATCC 29328 / DSM 20472 / WAL 2508) (Peptostreptococcus magnus).